Consider the following 145-residue polypeptide: Large ribosomal subunit protein uL11 (145 aa).

It belongs to the universal ribosomal protein uL11 family. Part of the ribosomal stalk of the 50S ribosomal subunit. Interacts with L10 and the large rRNA to form the base of the stalk. L10 forms an elongated spine to which L12 dimers bind in a sequential fashion forming a multimeric L10(L12)X complex. In terms of processing, one or more lysine residues are methylated.

Forms part of the ribosomal stalk which helps the ribosome interact with GTP-bound translation factors. This is Large ribosomal subunit protein uL11 from Rickettsia felis (strain ATCC VR-1525 / URRWXCal2) (Rickettsia azadi).